Consider the following 58-residue polypeptide: MSKTVVRKNESLDDALRRFKRSVSKAGTLQESRKREFYEKPSVKRKKKSEAARKRKKF.

Positions 37-58 (FYEKPSVKRKKKSEAARKRKKF) are disordered. A compositionally biased stretch (basic residues) spans 43–58 (VKRKKKSEAARKRKKF).

This sequence belongs to the bacterial ribosomal protein bS21 family.

In Enterococcus faecalis (strain ATCC 700802 / V583), this protein is Small ribosomal subunit protein bS21.